The chain runs to 308 residues: UDP-N-acetylenolpyruvoylglucosamine reductase (308 aa).

Residues Arg37–Gly201 enclose the FAD-binding PCMH-type domain. Arg181 is a catalytic residue. The segment covering Ser216–Lys233 has biased composition (polar residues). Positions Ser216–Pro236 are disordered. Ser230 acts as the Proton donor in catalysis. Residue Glu300 is part of the active site.

It belongs to the MurB family. Requires FAD as cofactor.

The protein localises to the cytoplasm. The catalysed reaction is UDP-N-acetyl-alpha-D-muramate + NADP(+) = UDP-N-acetyl-3-O-(1-carboxyvinyl)-alpha-D-glucosamine + NADPH + H(+). It participates in cell wall biogenesis; peptidoglycan biosynthesis. Functionally, cell wall formation. The protein is UDP-N-acetylenolpyruvoylglucosamine reductase of Azorhizobium caulinodans (strain ATCC 43989 / DSM 5975 / JCM 20966 / LMG 6465 / NBRC 14845 / NCIMB 13405 / ORS 571).